The following is a 446-amino-acid chain: Casein kinase I homolog 1 (446 aa).

The 263-residue stretch at 12–274 (YKVGRRIGEG…FDATPDYDYL (263 aa)) folds into the Protein kinase domain. Residues 18–26 (IGEGSFGVI) and Lys41 contribute to the ATP site. The active-site Proton acceptor is Asp131. Positions 308–430 (KSRNAETENQ…ETEAPKKKKS (123 aa)) are disordered. Ser329 is modified (phosphoserine). A compositionally biased stretch (polar residues) spans 332–345 (PALQNHASTQNVVS). Positions 346-355 (KRSDYEKPFA) are enriched in basic and acidic residues. Over residues 360–397 (NSASDSAEPNQNSLPNPPTETKATTTVPDRSGLATNQP) the composition is skewed to polar residues. Residues 401–412 (DVHDSSEERVTR) show a composition bias toward basic and acidic residues.

Belongs to the protein kinase superfamily. CK1 Ser/Thr protein kinase family. Casein kinase I subfamily.

The protein resides in the cytoplasm. The catalysed reaction is L-seryl-[protein] + ATP = O-phospho-L-seryl-[protein] + ADP + H(+). It carries out the reaction L-threonyl-[protein] + ATP = O-phospho-L-threonyl-[protein] + ADP + H(+). Casein kinases are operationally defined by their preferential utilization of acidic proteins such as caseins as substrates. This Schizosaccharomyces pombe (strain 972 / ATCC 24843) (Fission yeast) protein is Casein kinase I homolog 1 (cki1).